We begin with the raw amino-acid sequence, 316 residues long: PHD finger protein 20-like protein 1 (316 aa).

Positions 11–71 (ITFEIGARLE…SNRLRPLERP (61 aa)) constitute a Tudor 1 domain. Residues Lys-75 and Lys-79 each participate in a glycyl lysine isopeptide (Lys-Gly) (interchain with G-Cter in SUMO2) cross-link. Positions 85 to 141 (FDFKAGEEVLARWTDCRYYPAKIEAINKEGTFTVQFYDGVIRCLKRMHIKAMPEDAK) constitute a Tudor 2 domain. The tract at residues 183 to 237 (AKNKTGNKPRTSANSNKDKEKDERKWFKVPSKKEETSTSITTPEVEKKEDLPTSS) is disordered. Positions 186–197 (KTGNKPRTSANS) are enriched in polar residues. Residues 198–218 (NKDKEKDERKWFKVPSKKEET) are compositionally biased toward basic and acidic residues.

Interacts with methylated DNMT1 (DNMT1K142me1). Interacts with SOX2.

It is found in the nucleus. Its function is as follows. Is a negative regulator of proteasomal degradation of a set of methylated proteins, including DNMT1 and SOX2. Involved in the maintainance of embryonic stem cells pluripotency, through the regulation of SOX2 levels. This Bos taurus (Bovine) protein is PHD finger protein 20-like protein 1 (PHF20L1).